The following is a 68-amino-acid chain: Protein SlyX homolog (68 aa).

It belongs to the SlyX family.

The protein is Protein SlyX homolog of Brucella abortus (strain S19).